The following is a 216-amino-acid chain: MQLGMSSTKMKSLLKGLRYISQVFAIEGEKEEEMQIGNPTDVKHVAHIGWDGPSDNATAPSWMNDFKSSPVMESIQGLGEDDSSVKCQSEFGGRTRDLPKLPKSTRKSSSEKGSPTKERSDKTKRRTSNKGTSSSRRTKDEDSTSSSRRTTKDEDSSLSQHSAGLPEVPKKSKRKKSKEAGNGGSSRSSRISEADYMSDTGSDRSMPQFEDDRNGF.

The CRIB domain occupies 36–49 (IGNPTDVKHVAHIG). A disordered region spans residues 52-216 (GPSDNATAPS…PQFEDDRNGF (165 aa)). Residues 108–121 (SSSEKGSPTKERSD) are compositionally biased toward basic and acidic residues.

Interacts with ARAC4/ROP2 and ARAC11/ROP1. In terms of tissue distribution, expressed in roots, leaves, guard cells, stems, flowers, siliques and pollen.

It is found in the nucleus. Its subcellular location is the cytoplasm. It localises to the cell membrane. Its function is as follows. Functions as a downstream effector of Rho-related GTP binding proteins of the 'Rho of Plants' (ROPs) family. Participates in the propagation of ROP GTPase signals in specific cellular responses. Functions as a downstream effector of active ARAC4/ROP2 GTPase which is involved in the prevention of excessive stomatal opening upon light stimulation. Is involved in pollen tube growth regulation through its interaction with ARAC11/ROP1. The protein is CRIB domain-containing protein RIC7 (RIC7) of Arabidopsis thaliana (Mouse-ear cress).